The sequence spans 452 residues: Ribosomal protein uS12 methylthiotransferase RimO (452 aa).

The MTTase N-terminal domain maps to 8 to 123 (PRVGFVSLGC…VMQAVHTHLP (116 aa)). [4Fe-4S] cluster-binding residues include Cys17, Cys53, Cys82, Cys154, Cys158, and Cys161. Residues 140 to 381 (LTPKHYAYLK…MEVAEEVSAR (242 aa)) form the Radical SAM core domain. The 69-residue stretch at 384–452 (QRKVGQTLRV…ADGHDLWGEI (69 aa)) folds into the TRAM domain.

This sequence belongs to the methylthiotransferase family. RimO subfamily. The cofactor is [4Fe-4S] cluster.

The protein resides in the cytoplasm. It catalyses the reaction L-aspartate(89)-[ribosomal protein uS12]-hydrogen + (sulfur carrier)-SH + AH2 + 2 S-adenosyl-L-methionine = 3-methylsulfanyl-L-aspartate(89)-[ribosomal protein uS12]-hydrogen + (sulfur carrier)-H + 5'-deoxyadenosine + L-methionine + A + S-adenosyl-L-homocysteine + 2 H(+). In terms of biological role, catalyzes the methylthiolation of an aspartic acid residue of ribosomal protein uS12. This Cupriavidus pinatubonensis (strain JMP 134 / LMG 1197) (Cupriavidus necator (strain JMP 134)) protein is Ribosomal protein uS12 methylthiotransferase RimO.